Reading from the N-terminus, the 104-residue chain is L-rhamnose mutarotase (104 aa).

Position 18 (Y18) interacts with substrate. The active-site Proton donor is the H22. Residues Y41 and 76–77 (WW) contribute to the substrate site.

Belongs to the rhamnose mutarotase family. In terms of assembly, homodimer.

It localises to the cytoplasm. It carries out the reaction alpha-L-rhamnose = beta-L-rhamnose. Its pathway is carbohydrate metabolism; L-rhamnose metabolism. In terms of biological role, involved in the anomeric conversion of L-rhamnose. The chain is L-rhamnose mutarotase from Salmonella heidelberg (strain SL476).